The following is a 64-amino-acid chain: Disintegrin schistatin (64 aa).

The region spanning 1-64 (NSVHPCCDPV…PDCPRNRYNV (64 aa)) is the Disintegrin domain. 4 cysteine pairs are disulfide-bonded: cysteine 6-cysteine 29, cysteine 20-cysteine 26, cysteine 25-cysteine 50, and cysteine 38-cysteine 57. Residues 42 to 44 (RGD) carry the Cell attachment site motif.

Belongs to the disintegrin family. Dimeric disintegrin subfamily. In terms of assembly, homodimer; disulfide-linked. Expressed by the venom gland.

It localises to the secreted. Its function is as follows. May bind to both alpha-IIb/beta-3 (ITGA2B/ITGB3) and alpha-V/beta-3 (ITGAV/ITGB3) integrins, and may inhibit platelet aggregation. The sequence is that of Disintegrin schistatin from Echis carinatus (Saw-scaled viper).